The following is a 227-amino-acid chain: 2,3-bisphosphoglycerate-dependent phosphoglycerate mutase (227 aa).

Substrate is bound by residues 7–14 (RHGQSEWN), 20–21 (TG), arginine 59, 86–89 (ERHY), lysine 97, 113–114 (RR), and 182–183 (GN). Histidine 8 acts as the Tele-phosphohistidine intermediate in catalysis. Glutamate 86 (proton donor/acceptor) is an active-site residue.

Belongs to the phosphoglycerate mutase family. BPG-dependent PGAM subfamily. In terms of assembly, homodimer.

It carries out the reaction (2R)-2-phosphoglycerate = (2R)-3-phosphoglycerate. It functions in the pathway carbohydrate degradation; glycolysis; pyruvate from D-glyceraldehyde 3-phosphate: step 3/5. In terms of biological role, catalyzes the interconversion of 2-phosphoglycerate and 3-phosphoglycerate. This Neisseria gonorrhoeae (strain ATCC 700825 / FA 1090) protein is 2,3-bisphosphoglycerate-dependent phosphoglycerate mutase.